We begin with the raw amino-acid sequence, 203 residues long: Holliday junction branch migration complex subunit RuvA (203 aa).

The segment at 1–63 (MYEYLKGLVT…DTDITLFGFY (63 aa)) is domain I. Residues 64 to 142 (DLDEKQLFQK…DLEQSATLVG (79 aa)) are domain II. The tract at residues 143-153 (QTAIDLGSQGD) is flexible linker. Residues 153 to 203 (DSPELSDALAALSALGYSAREVKAITPKLTDFAAQTTDQYLREGLRLLMKK) are domain III.

It belongs to the RuvA family. As to quaternary structure, homotetramer. Forms an RuvA(8)-RuvB(12)-Holliday junction (HJ) complex. HJ DNA is sandwiched between 2 RuvA tetramers; dsDNA enters through RuvA and exits via RuvB. An RuvB hexamer assembles on each DNA strand where it exits the tetramer. Each RuvB hexamer is contacted by two RuvA subunits (via domain III) on 2 adjacent RuvB subunits; this complex drives branch migration. In the full resolvosome a probable DNA-RuvA(4)-RuvB(12)-RuvC(2) complex forms which resolves the HJ.

Its subcellular location is the cytoplasm. Functionally, the RuvA-RuvB-RuvC complex processes Holliday junction (HJ) DNA during genetic recombination and DNA repair, while the RuvA-RuvB complex plays an important role in the rescue of blocked DNA replication forks via replication fork reversal (RFR). RuvA specifically binds to HJ cruciform DNA, conferring on it an open structure. The RuvB hexamer acts as an ATP-dependent pump, pulling dsDNA into and through the RuvAB complex. HJ branch migration allows RuvC to scan DNA until it finds its consensus sequence, where it cleaves and resolves the cruciform DNA. This is Holliday junction branch migration complex subunit RuvA from Latilactobacillus sakei subsp. sakei (strain 23K) (Lactobacillus sakei subsp. sakei).